Reading from the N-terminus, the 190-residue chain is MEISTIECVIESLIFSYGDPLPLDKICEILELDKKTARSILKNMMDSYNNSNRGIIIREINEKYQMCSKPEYFDYVSKLYQIRQKQALSQAAYEVLAIIAYNQPITRAKIEQIRGVNSDSAVTRLTERNLIKEAGKLDVPGRPRLYETTDEFLRCFGFKSIRDLPLLDIDDLNELNLQELVEEFDEEGNK.

The protein belongs to the ScpB family. Homodimer. Homodimerization may be required to stabilize the binding of ScpA to the Smc head domains. Component of a cohesin-like complex composed of ScpA, ScpB and the Smc homodimer, in which ScpA and ScpB bind to the head domain of Smc. The presence of the three proteins is required for the association of the complex with DNA.

Its subcellular location is the cytoplasm. Participates in chromosomal partition during cell division. May act via the formation of a condensin-like complex containing Smc and ScpA that pull DNA away from mid-cell into both cell halves. This is Segregation and condensation protein B from Ruminiclostridium cellulolyticum (strain ATCC 35319 / DSM 5812 / JCM 6584 / H10) (Clostridium cellulolyticum).